The sequence spans 652 residues: Serine/threonine-protein kinase ssp1 (652 aa).

Residue Tyr58 is modified to Phosphotyrosine. Ser59 bears the Phosphoserine mark. Tyr63 carries the phosphotyrosine modification. A Protein kinase domain is found at 135-409 (YEIIKELGRG…LVEVKLHPWT (275 aa)). ATP contacts are provided by residues 141-149 (LGRGMHGKV) and Lys164. Asp267 functions as the Proton acceptor in the catalytic mechanism. Disordered regions lie at residues 467-491 (DSSSSVPSDSSICRPESSGNSSIGL) and 506-529 (NESQKDRERKQVHPVEMGRNSSEK). Positions 508–518 (SQKDRERKQVH) are enriched in basic and acidic residues.

The protein belongs to the protein kinase superfamily. Ser/Thr protein kinase family.

The protein resides in the cytoplasm. The catalysed reaction is L-seryl-[protein] + ATP = O-phospho-L-seryl-[protein] + ADP + H(+). It carries out the reaction L-threonyl-[protein] + ATP = O-phospho-L-threonyl-[protein] + ADP + H(+). Its function is as follows. Involved in actin localization and thus in polarized cell growth. The chain is Serine/threonine-protein kinase ssp1 (ssp1) from Schizosaccharomyces pombe (strain 972 / ATCC 24843) (Fission yeast).